A 227-amino-acid chain; its full sequence is GFP-like non-fluorescent chromoprotein (227 aa).

The 2-iminomethyl-5-imidazolinone (Glu-Gly) cross-link spans 63-65; sequence EYG. Tyr64 is modified (2,3-didehydrotyrosine).

It belongs to the GFP family. Homotetramer. Post-translationally, contains a chromophore consisting of modified amino acid residues. The chromophore is formed by autocatalytic backbone condensation between Xaa-N and Gly-(N+2), oxidation of Tyr-(N+1) to didehydrotyrosine, and formation of a double bond to the alpha-amino nitrogen of residue Xaa-N. Maturation of the chromophore requires nothing other than molecular oxygen. The precise stereochemistry of the tyrosine has not been determined.

In terms of biological role, non-fluorescent pigment protein that is lilac in color. This is GFP-like non-fluorescent chromoprotein from Radianthus crispa (Leathery sea anemone).